A 306-amino-acid polypeptide reads, in one-letter code: Glutathione transport system permease protein GsiC (306 aa).

Topologically, residues 1-8 (MLNYVLKR) are cytoplasmic. The chain crosses the membrane as a helical span at residues 9 to 29 (LLGLIPTLLIVAVLVFLFVHL). At 30–102 (LPGDPARLIA…SRFLPTLWLT (73 aa)) the chain is on the periplasmic side. Residues 95-292 (FLPTLWLTIT…LEFILINLVV (198 aa)) form the ABC transmembrane type-1 domain. A helical transmembrane segment spans residues 103–123 (ITSMIWAVLFGMAIGIAAAVW). The Cytoplasmic portion of the chain corresponds to 124–134 (RNRWPDRLGMT). A helical transmembrane segment spans residues 135 to 155 (LAVTGISFPAFALGMLLMQIF). At 156–168 (SVDLGWLPTVGAD) the chain is on the periplasmic side. Residues 169 to 189 (SWQHYILPSLTLGAAVASVMA) form a helical membrane-spanning segment. Topologically, residues 190-228 (RFTRSSFVDVLSEDYMRTARAKGVSETWVVLKHGLRNAM) are cytoplasmic. Residues 229–249 (IPVVTMMGLQFGFLLGGSIVV) form a helical membrane-spanning segment. Over 250–278 (EKVFNWPGLGRLLVDSVDMRDYPVIQAEV) the chain is Periplasmic. Residues 279–299 (LLFSLEFILINLVVDVLYAAI) form a helical membrane-spanning segment. Residues 300 to 306 (NPAIRYK) lie on the Cytoplasmic side of the membrane.

Belongs to the binding-protein-dependent transport system permease family. In terms of assembly, the complex is composed of two ATP-binding proteins (GsiA), two transmembrane proteins (GsiC and GsiD) and a solute-binding protein (GsiB).

The protein resides in the cell inner membrane. Part of the ABC transporter complex GsiABCD involved in glutathione import. Probably responsible for the translocation of the substrate across the membrane. This Salmonella typhimurium (strain LT2 / SGSC1412 / ATCC 700720) protein is Glutathione transport system permease protein GsiC.